A 134-amino-acid chain; its full sequence is UPF0412 protein YaaI (134 aa).

Residues 1–23 form the signal peptide; sequence MKSVITISASLAISLMLCCTAQA.

The protein belongs to the UPF0412 family.

The sequence is that of UPF0412 protein YaaI from Escherichia coli (strain UTI89 / UPEC).